A 77-amino-acid chain; its full sequence is Conotoxin Vc6c (77 aa).

An N-terminal signal peptide occupies residues 1-22 (MKLTCMVIVAVLFLTANTFVTA). A propeptide spanning residues 23-51 (DDSGNGLENLFSKAHHEIKNPEASNLNKR) is cleaved from the precursor. Intrachain disulfides connect C52-C67, C59-C71, and C66-C76.

Expressed by the venom duct.

The protein localises to the secreted. This is Conotoxin Vc6c from Conus victoriae (Queen Victoria cone).